Reading from the N-terminus, the 315-residue chain is 4-hydroxy-3-methylbut-2-enyl diphosphate reductase (315 aa).

C12 lines the [4Fe-4S] cluster pocket. 2 residues coordinate (2E)-4-hydroxy-3-methylbut-2-enyl diphosphate: H43 and H81. 2 residues coordinate dimethylallyl diphosphate: H43 and H81. Positions 43 and 81 each coordinate isopentenyl diphosphate. C103 serves as a coordination point for [4Fe-4S] cluster. H131 serves as a coordination point for (2E)-4-hydroxy-3-methylbut-2-enyl diphosphate. H131 contributes to the dimethylallyl diphosphate binding site. H131 lines the isopentenyl diphosphate pocket. E133 (proton donor) is an active-site residue. A (2E)-4-hydroxy-3-methylbut-2-enyl diphosphate-binding site is contributed by T170. [4Fe-4S] cluster is bound at residue C198. (2E)-4-hydroxy-3-methylbut-2-enyl diphosphate is bound by residues S226, N228, and S271. Residues S226, N228, and S271 each coordinate dimethylallyl diphosphate. Residues S226, N228, and S271 each contribute to the isopentenyl diphosphate site.

It belongs to the IspH family. Requires [4Fe-4S] cluster as cofactor.

The catalysed reaction is isopentenyl diphosphate + 2 oxidized [2Fe-2S]-[ferredoxin] + H2O = (2E)-4-hydroxy-3-methylbut-2-enyl diphosphate + 2 reduced [2Fe-2S]-[ferredoxin] + 2 H(+). It carries out the reaction dimethylallyl diphosphate + 2 oxidized [2Fe-2S]-[ferredoxin] + H2O = (2E)-4-hydroxy-3-methylbut-2-enyl diphosphate + 2 reduced [2Fe-2S]-[ferredoxin] + 2 H(+). Its pathway is isoprenoid biosynthesis; dimethylallyl diphosphate biosynthesis; dimethylallyl diphosphate from (2E)-4-hydroxy-3-methylbutenyl diphosphate: step 1/1. It functions in the pathway isoprenoid biosynthesis; isopentenyl diphosphate biosynthesis via DXP pathway; isopentenyl diphosphate from 1-deoxy-D-xylulose 5-phosphate: step 6/6. Catalyzes the conversion of 1-hydroxy-2-methyl-2-(E)-butenyl 4-diphosphate (HMBPP) into a mixture of isopentenyl diphosphate (IPP) and dimethylallyl diphosphate (DMAPP). Acts in the terminal step of the DOXP/MEP pathway for isoprenoid precursor biosynthesis. The sequence is that of 4-hydroxy-3-methylbut-2-enyl diphosphate reductase from Geobacillus sp. (strain WCH70).